A 248-amino-acid chain; its full sequence is MAIALSSSSTITSITLQPKLKTIHGLGTVLPGYSVKSHFRSVSLRRSAVVVSAITGASSGAGIGKGTADSLDTVKVLDLRGNEIPISDLWKDRKAVVAFARHFGCVLCRKRAAYLAEKKDVMDASGVALVLIGPGSIDQANTFVEQTKFKGEVYADPNHASYEALEFVSGVSVTFTPKAAMKILESYMEGYRQDWKLSFMKDTVERGGWQQGGILVAGPGKDNISYIRKDKEAGDDPPVEEILKACCA.

The transit peptide at Met1 to Ser52 directs the protein to the chloroplast. Ala53 is modified (N-acetylalanine).

The protein belongs to the peroxiredoxin-like PRXL2 family. PRXL2C subfamily.

The protein localises to the plastid. Its subcellular location is the chloroplast. In Arabidopsis thaliana (Mouse-ear cress), this protein is Thioredoxin-like protein AAED1, chloroplastic.